The primary structure comprises 444 residues: COP9 signalosome complex subunit 2 (444 aa).

Residues 1–31 (MSDNDDDFMCDDDEDYGLEYSEDSNSEPDVD) are disordered. A PCI domain is found at 255–417 (AHTDFFEAFK…QVLQLDKINS (163 aa)).

The protein belongs to the CSN2 family. As to quaternary structure, component of the CSN complex, probably composed of CSN1b, alien/CSN2, CSN3, CSN4, CSN5, CSN6, CSN7 and CSN8. Interacts with Rpn6. In terms of tissue distribution, expressed during embryonic stages 11-14 in the muscle attachment sites (apodemes); pharynx attachment to the roof of the mouth and in the epidermis of the head for the dorsal and ventral prothoracic pharyngeal muscle attachment. From stage 16 onwards expression is seen in all thoracic and abdominal apodemes.

The protein resides in the cytoplasm. The protein localises to the nucleus. Component of the COP9 signalosome complex (CSN), a complex involved in various cellular and developmental processes. The CSN complex is an essential regulator of the ubiquitin (Ubl) conjugation pathway by mediating the deneddylation of the cullin subunits of the SCF-type E3 ligase complexes, leading to decrease the Ubl ligase activity of SCF. The CSN complex plays an essential role in oogenesis and embryogenesis and is required for proper photoreceptor R cell differentiation and promote lamina glial cell migration or axon targeting. It also promotes Ubl-dependent degradation of cyclin E (CycE) during early oogenesis. In Drosophila melanogaster (Fruit fly), this protein is COP9 signalosome complex subunit 2.